Here is a 401-residue protein sequence, read N- to C-terminus: Restriction of telomere capping protein 4 (401 aa).

Ser23 carries the post-translational modification Phosphoserine. Residues 35-48 (KHDIHDRESDDLSG) are compositionally biased toward basic and acidic residues. The tract at residues 35–59 (KHDIHDRESDDLSGHDAFSPSKKRG) is disordered.

The protein belongs to the RTC4 family.

Its subcellular location is the cytoplasm. The protein localises to the nucleus. Its function is as follows. May be involved in a process influencing telomere capping. In Saccharomyces cerevisiae (strain ATCC 204508 / S288c) (Baker's yeast), this protein is Restriction of telomere capping protein 4 (RTC4).